Here is a 288-residue protein sequence, read N- to C-terminus: Cyclin-dependent kinase 2 homolog (288 aa).

Residues 4–284 (YHGLEKIGEG…AKQAIEHPYF (281 aa)) enclose the Protein kinase domain. ATP is bound by residues 10 to 18 (IGEGTYGVV) and Lys32. The residue at position 14 (Thr14) is a Phosphothreonine. Residue Tyr15 is modified to Phosphotyrosine. Asp125 serves as the catalytic Proton acceptor. A Phosphothreonine modification is found at Thr158.

The protein belongs to the protein kinase superfamily. CMGC Ser/Thr protein kinase family. CDC2/CDKX subfamily. May form a complex composed of at least the catalytic subunit CRK2 and a cyclin. Requires Mg(2+) as cofactor.

The protein localises to the cytoplasm. It carries out the reaction L-seryl-[protein] + ATP = O-phospho-L-seryl-[protein] + ADP + H(+). The catalysed reaction is L-threonyl-[protein] + ATP = O-phospho-L-threonyl-[protein] + ADP + H(+). It catalyses the reaction [DNA-directed RNA polymerase] + ATP = phospho-[DNA-directed RNA polymerase] + ADP + H(+). Its activity is regulated as follows. Phosphorylation at Thr-14 or Tyr-15 inactivates the enzyme, while phosphorylation at Thr-158 activates it. Functionally, serine/threonine-protein kinase. Involved in the control of the cell cycle. Required for entry into S-phase and mitosis. Probable component of the kinase complex that phosphorylates the repetitive C-terminus of RNA polymerase II. The sequence is that of Cyclin-dependent kinase 2 homolog from Plasmodium chabaudi chabaudi.